The sequence spans 668 residues: Phosphatidylinositol 4-phosphate 5-kinase type-1 gamma (668 aa).

Positions 45-67 are disordered; it reads SMTAQPGPGHGKKLGHRGVDASG. In terms of domain architecture, PIPK spans 75–443; sequence TSSTLKGAIQ…RFFKFMSNTV (369 aa). Lys-265 and Lys-268 each carry N6-acetyllysine. Arg-459 is modified (asymmetric dimethylarginine; alternate). An Omega-N-methylarginine; alternate modification is found at Arg-459. The span at 526–535 shows a compositional bias: low complexity; that stretch reads TTLSSTSLSI. 2 disordered regions span residues 526–578 and 593–642; these read TTLS…ITVQ and EDAG…YFPT. Position 555 is a phosphoserine (Ser-555). The residue at position 639 (Tyr-639) is a Phosphotyrosine; by EGFR. The segment at 641–668 is mediates interaction with TLN2; the sequence is PTDERSWVYSPLHYSAQAPPASDGESDT. Tyr-649 is modified (phosphotyrosine; by CSK). At Ser-650 the chain carries Phosphoserine; by CDK5, MAPK1 and CDK1. A phosphoserine mark is found at Ser-662 and Ser-666. The residue at position 668 (Thr-668) is a Phosphothreonine.

Interacts with TLN1. Interacts with TLN2; interaction stimulates 1-phosphatidylinositol-4-phosphate 5-kinase activity. May compete with beta-integrins for the same binding site on TLN1 and TLN2. Interacts with ARF6; interaction stimulates 1-phosphatidylinositol-4-phosphate 5-kinase activity. Interacts with AP2B1. Interacts with AP2M1; phosphorylation of PIP5K1C by CSK disrupts the interaction; clathrin competes with PIP5K1C. Interacts with CDH1. Interacts with CSK. Interacts with PLCG1; interaction is abolished upon EGF stimulation. Interacts with LAPTM4B; promotes SNX5 association with LAPTM4B; kinase activity of PIP5K1C is required; interaction is regulated by phosphatidylinositol 4,5-bisphosphate generated by PIP5K1C. Phosphorylation on Ser-650 negatively regulates binding to TLN2 and is strongly stimulated in mitosis. Phosphorylation on Tyr-649 is necessary for targeting to focal adhesions. Phosphorylation on Ser-650 and Tyr-649 are mutually exclusive. Phosphorylated by SYK and CSK. Tyrosine phosphorylation is enhanced by PTK2 signaling. Phosphorylated at Tyr-639 upon EGF stimulation. Some studies suggest that phosphorylation on Tyr-649 enhances binding to tailins (TLN1 and TLN2). According to PubMed:15738269 phosphorylation at Tyr-649 does not directly enhance binding to tailins (TLN1 and TLN2) but may act indirectly by inhibiting phosphorylation at Ser-650. Post-translationally, acetylation at Lys-265 and Lys-268 seems to decrease lipid 1-phosphatidylinositol-4-phosphate 5-kinase activity. Deacetylation of these sites by SIRT1 positively regulates the exocytosis of TSH-containing granules from pituitary cells. In terms of tissue distribution, isoform 1 is strongly expressed in brain and also detected in heart and lung. Isoform 2 is strongly expressed in pancreas and liver and in lesser quantities in brain, heart, lung and kidney. As to expression, isoform 3 is detected in large amounts in heart and large intestine, is also present in lung, pancreas and thyroid, and to a lesser extent in brain, stomach and kidney.

The protein localises to the cell membrane. Its subcellular location is the endomembrane system. It localises to the cytoplasm. It is found in the cell junction. The protein resides in the focal adhesion. The protein localises to the adherens junction. Its subcellular location is the cell projection. It localises to the ruffle membrane. It is found in the phagocytic cup. The protein resides in the uropodium. The protein localises to the nucleus. The enzyme catalyses a 1,2-diacyl-sn-glycero-3-phospho-(1D-myo-inositol 4-phosphate) + ATP = a 1,2-diacyl-sn-glycero-3-phospho-(1D-myo-inositol-4,5-bisphosphate) + ADP + H(+). It catalyses the reaction 1-octadecanoyl-2-(5Z,8Z,11Z,14Z)-eicosatetraenoyl-sn-glycero-3-phospho-1D-myo-inositol 4-phosphate + ATP = 1-octadecanoyl-2-(5Z,8Z,11Z,14Z)-eicosatetraenoyl-sn-glycero-3-phospho-1D-myo-inositol 4,5-bisphosphate + ADP + H(+). The catalysed reaction is 1-octadecanoyl-2-(9Z)-octadecenoyl-sn-glycero-3-phospho-1D-myo-inositol 4-phosphate + ATP = 1-octadecanoyl-2-(9Z)-octadecenoyl-sn-glycero-3-phospho-1D-myo-inositol 4,5-bisphosphate + ADP + H(+). It carries out the reaction 1-octadecanoyl-2-(9Z)-octadecenoyl-sn-glycero-3-phospho-1D-myo-inositol + ATP = 1-octadecanoyl-2-(9Z)-octadecenoyl-sn-glycero-3-phospho-1D-myo-inositol 5-phosphate + ADP + H(+). The enzyme catalyses 1-octadecanoyl-2-(9Z,12Z)-octadecadienoyl-sn-glycero-3-phospho-1D-myo-inositol + ATP = 1-octadecanoyl-2-(9Z,12Z)-octadecadienoyl-sn-glycero-3-phospho-1D-myo-inositol 5-phosphate + ADP + H(+). It catalyses the reaction 1-octadecanoyl-2-(5Z,8Z,11Z,14Z-eicosatetraenoyl)-sn-glycero-3-phospho-(1D-myo-inositol) + ATP = 1-octadecanoyl-2-(5Z,8Z,11Z,14Z)-eicosatetraenoyl-sn-glycero-3-phospho-1D-myo-inositol 5-phosphate + ADP + H(+). The catalysed reaction is 1,2-di-(9Z,12Z)-octadecadienoyl-sn-glycero-3-phospho-1D-myo-inositol + ATP = 1,2-di(9Z,12Z)-octadecadienoyl-sn-glycero-3-phospho-1D-myo-inositol 5-phosphate + ADP + H(+). In terms of biological role, catalyzes the phosphorylation of phosphatidylinositol 4-phosphate (PtdIns(4)P/PI4P) to form phosphatidylinositol 4,5-bisphosphate (PtdIns(4,5)P2/PIP2), a lipid second messenger that regulates several cellular processes such as signal transduction, vesicle trafficking, actin cytoskeleton dynamics, cell adhesion, and cell motility. PtdIns(4,5)P2 can directly act as a second messenger or can be utilized as a precursor to generate other second messengers: inositol 1,4,5-trisphosphate (IP3), diacylglycerol (DAG) or phosphatidylinositol-3,4,5-trisphosphate (PtdIns(3,4,5)P3/PIP3). PIP5K1A-mediated phosphorylation of PtdIns(4)P is the predominant pathway for PtdIns(4,5)P2 synthesis. Together with PIP5K1A, is required for phagocytosis, both enzymes regulating different types of actin remodeling at sequential steps. Promotes particle attachment by generating the pool of PtdIns(4,5)P2 that induces controlled actin depolymerization to facilitate Fc-gamma-R clustering. Mediates RAC1-dependent reorganization of actin filaments. Required for synaptic vesicle transport. Controls the plasma membrane pool of PtdIns(4,5)P2 implicated in synaptic vesicle endocytosis and exocytosis. Plays a role in endocytosis mediated by clathrin and AP-2 (adaptor protein complex 2). Required for clathrin-coated pits assembly at the synapse. Participates in cell junction assembly. Modulates adherens junctions formation by facilitating CDH1/cadherin trafficking. Required for focal adhesion dynamics. Modulates the targeting of talins (TLN1 and TLN2) to the plasma membrane and their efficient assembly into focal adhesions. Regulates the interaction between talins (TLN1 and TLN2) and beta-integrins. Required for uropodium formation and retraction of the cell rear during directed migration. Has a role in growth factor-stimulated directional cell migration and adhesion. Required for talin assembly into nascent adhesions forming at the leading edge toward the direction of the growth factor. Negative regulator of T-cell activation and adhesion. Negatively regulates integrin alpha-L/beta-2 (LFA-1) polarization and adhesion induced by T-cell receptor. Together with PIP5K1A has a role during embryogenesis and together with PIP5K1B may have a role immediately after birth. This chain is Phosphatidylinositol 4-phosphate 5-kinase type-1 gamma, found in Homo sapiens (Human).